The primary structure comprises 147 residues: D-aminoacyl-tRNA deacylase (147 aa).

Residues 136–137 (GP) carry the Gly-cisPro motif, important for rejection of L-amino acids motif.

This sequence belongs to the DTD family. In terms of assembly, homodimer.

The protein resides in the cytoplasm. It carries out the reaction glycyl-tRNA(Ala) + H2O = tRNA(Ala) + glycine + H(+). The catalysed reaction is a D-aminoacyl-tRNA + H2O = a tRNA + a D-alpha-amino acid + H(+). Functionally, an aminoacyl-tRNA editing enzyme that deacylates mischarged D-aminoacyl-tRNAs. Also deacylates mischarged glycyl-tRNA(Ala), protecting cells against glycine mischarging by AlaRS. Acts via tRNA-based rather than protein-based catalysis; rejects L-amino acids rather than detecting D-amino acids in the active site. By recycling D-aminoacyl-tRNA to D-amino acids and free tRNA molecules, this enzyme counteracts the toxicity associated with the formation of D-aminoacyl-tRNA entities in vivo and helps enforce protein L-homochirality. This Streptococcus pneumoniae (strain Taiwan19F-14) protein is D-aminoacyl-tRNA deacylase.